The primary structure comprises 418 residues: Voltage-gated ClC-type chloride channel ClcB (418 aa).

10 helical membrane passes run 5–25 (LLIA…FRHA), 54–74 (LLTP…WQKF), 146–166 (LWIA…PLAG), 168–188 (LFIA…PVII), 222–242 (ALII…LTLM), 260–280 (LALG…VWGN), 291–311 (APPL…AVLA), 316–336 (GAPG…GMLY), 352–372 (LLLG…APIM), and 380–400 (MTGE…ASVI).

Belongs to the chloride channel (TC 2.A.49) family. ClcB subfamily.

It localises to the cell inner membrane. In terms of biological role, probably acts as an electrical shunt for an outwardly-directed proton pump that is linked to amino acid decarboxylation, as part of the extreme acid resistance (XAR) response. The chain is Voltage-gated ClC-type chloride channel ClcB from Escherichia coli O9:H4 (strain HS).